The sequence spans 135 residues: Endoribonuclease YbeY (135 aa).

Residues His-102, His-106, and His-112 each contribute to the Zn(2+) site.

This sequence belongs to the endoribonuclease YbeY family. Requires Zn(2+) as cofactor.

The protein resides in the cytoplasm. Single strand-specific metallo-endoribonuclease involved in late-stage 70S ribosome quality control and in maturation of the 3' terminus of the 16S rRNA. The polypeptide is Endoribonuclease YbeY (Rubrobacter xylanophilus (strain DSM 9941 / JCM 11954 / NBRC 16129 / PRD-1)).